The chain runs to 325 residues: Glutarate 2-hydroxylase (325 aa).

The Fe cation site is built by His-160, Asp-162, and His-292.

The protein belongs to the glutarate hydroxylase family. Homotetramer. Fe(2+) serves as cofactor.

It catalyses the reaction glutarate + 2-oxoglutarate + O2 = (S)-2-hydroxyglutarate + succinate + CO2. The protein operates within amino-acid degradation. Acts as an alpha-ketoglutarate-dependent dioxygenase catalyzing hydroxylation of glutarate (GA) to L-2-hydroxyglutarate (L2HG). Functions in a L-lysine degradation pathway that proceeds via cadaverine, glutarate and L-2-hydroxyglutarate. The chain is Glutarate 2-hydroxylase from Escherichia coli O157:H7.